The following is a 375-amino-acid chain: Actin-binding Rho-activating protein (375 aa).

2 stretches are compositionally biased toward basic and acidic residues: residues 1–11 (MAPGEREREAG) and 79–99 (KPDRDGEGQHSEEATEVSHIK). Disordered regions lie at residues 1–20 (MAPGEREREAGPAKSALRKV) and 38–99 (NENS…SHIK). Residues serine 150 and serine 182 each carry the phosphoserine modification. A compositionally biased stretch (basic and acidic residues) spans 173–182 (QEEPTWKSDS). The tract at residues 173–204 (QEEPTWKSDSVDTEDSGYGGDMEERPEQDAAP) is disordered. Actin-binding regions lie at residues 193 to 293 (DMEE…AERA) and 294 to 375 (KRAE…TLLE). Interaction with actin stretches follow at residues 234–279 (SQVD…GDEG) and 346–375 (MRARKHGLVHFEGEMLWQGRDDHVVITLLE).

In terms of assembly, binds F-actin and ABLIM1, ABLIM2 and ABLIM3. Interaction with ABLIM2 and ABLIM3 enhances activity. As to expression, expressed specifically in heart and skeletal muscle.

Its subcellular location is the cytoplasm. It is found in the myofibril. It localises to the sarcomere. The protein localises to the cytoskeleton. In terms of biological role, acts as an activator of serum response factor (SRF)-dependent transcription possibly by inducing nuclear translocation of MKL1 or MKL2 and through a mechanism requiring Rho-actin signaling. The protein is Actin-binding Rho-activating protein of Mus musculus (Mouse).